The primary structure comprises 85 residues: U4-theraphotoxin-Hhn1h (85 aa).

A signal peptide spans 1 to 22 (MKVTLIAILTCAAVLVLHTTAA). Positions 23–48 (EELEAESQLMEVGMPDTELAAVDEER) are excised as a propeptide. Intrachain disulfides connect cysteine 52–cysteine 66, cysteine 56–cysteine 77, and cysteine 71–cysteine 82.

It belongs to the neurotoxin 12 (Hwtx-2) family. 02 (Hwtx-2) subfamily. In terms of tissue distribution, expressed by the venom gland.

It localises to the secreted. Functionally, postsynaptic neurotoxin. The sequence is that of U4-theraphotoxin-Hhn1h from Cyriopagopus hainanus (Chinese bird spider).